The primary structure comprises 156 residues: Protein-export protein SecB (156 aa).

This sequence belongs to the SecB family. In terms of assembly, homotetramer, a dimer of dimers. One homotetramer interacts with 1 SecA dimer.

The protein resides in the cytoplasm. Functionally, one of the proteins required for the normal export of preproteins out of the cell cytoplasm. It is a molecular chaperone that binds to a subset of precursor proteins, maintaining them in a translocation-competent state. It also specifically binds to its receptor SecA. The sequence is that of Protein-export protein SecB from Desulfotalea psychrophila (strain LSv54 / DSM 12343).